Here is a 376-residue protein sequence, read N- to C-terminus: MGQQQSQSKDEMLFQEVSNNNVEGIKSLHHEGAGLEGVDKLGRTPLILACTNDDLYDVAKTLLELGSNVNAYRSGCNGGTPLHHAAKRGLVHTVKLLLSHGANPLVLDDDVKTALEVARDEGYSNVVRAIESHICLFSGCMREYSGSSLLNLFAPQLLSRKVWVVVVPTGSRNPTKPLKLELVLYDSIQDAQPRMVIPLWKANLEEPKSFRCDDSVMIIDDSRSPKSMRQRRESGFISQARRWAQVDRQIRLKLAAEIKGDMKQMNWFSEACKGVPQPMNPPRFMKTSQATTTTTNVPALSDDALTRVAMSLPSPKTANKEDGLCVICVDAPSEAVCVPCGHVAGCISCLKEIENKKMGCPVCRANIDQVIKLYHV.

ANK repeat units lie at residues 41-71 (LGRT…NVNA) and 77-106 (NGGT…NPLV). The segment at 325–364 (CVICVDAPSEAVCVPCGHVAGCISCLKEIENKKMGCPVCR) adopts an RING-type zinc-finger fold.

The enzyme catalyses S-ubiquitinyl-[E2 ubiquitin-conjugating enzyme]-L-cysteine + [acceptor protein]-L-lysine = [E2 ubiquitin-conjugating enzyme]-L-cysteine + N(6)-ubiquitinyl-[acceptor protein]-L-lysine.. It functions in the pathway protein modification; protein ubiquitination. In terms of biological role, no E3 ubiquitin-protein ligase activity observed when associated with the E2 enzyme UBC8 in vitro. This chain is Putative E3 ubiquitin-protein ligase XBAT34 (XBAT34), found in Arabidopsis thaliana (Mouse-ear cress).